Here is a 442-residue protein sequence, read N- to C-terminus: Histidinol dehydrogenase (442 aa).

Tyr136, Gln197, and Asn220 together coordinate NAD(+). Substrate contacts are provided by Ser243, Gln265, and His268. Positions 265 and 268 each coordinate Zn(2+). Catalysis depends on proton acceptor residues Glu333 and His334. Substrate-binding residues include His334, Asp367, Glu421, and His426. Asp367 is a binding site for Zn(2+). His426 contacts Zn(2+).

This sequence belongs to the histidinol dehydrogenase family. The cofactor is Zn(2+).

It carries out the reaction L-histidinol + 2 NAD(+) + H2O = L-histidine + 2 NADH + 3 H(+). It participates in amino-acid biosynthesis; L-histidine biosynthesis; L-histidine from 5-phospho-alpha-D-ribose 1-diphosphate: step 9/9. In terms of biological role, catalyzes the sequential NAD-dependent oxidations of L-histidinol to L-histidinaldehyde and then to L-histidine. The chain is Histidinol dehydrogenase from Pseudomonas fluorescens (strain ATCC BAA-477 / NRRL B-23932 / Pf-5).